The chain runs to 381 residues: DNA repair protein RAD51 homolog 3 (381 aa).

The disordered stretch occupies residues 1–24 (MDEDINKDTNNNNNTTDSNNNNNN). A compositionally biased stretch (low complexity) spans 8-24 (DTNNNNNTTDSNNNNNN). Position 89–96 (89–96 (GVPGIGKT)) interacts with ATP. Residues 313 to 381 (GFNHPPPLNP…NDENEMYIEN (69 aa)) are disordered. A coiled-coil region spans residues 323 to 377 (EDQEQEKEKEKRKKKNNNNNNNNNNNNNNNNNNNNNNNNNNNNNNNNKNNDENEM). Residues 339-370 (NNNNNNNNNNNNNNNNNNNNNNNNNNNNNNNK) show a composition bias toward low complexity.

It belongs to the RecA family. RAD51 subfamily.

It is found in the nucleus. Functionally, involved in the homologous recombination repair (HRR) pathway of double-stranded DNA breaks arising during DNA replication or induced by DNA-damaging agents. The sequence is that of DNA repair protein RAD51 homolog 3 (rad51c) from Dictyostelium discoideum (Social amoeba).